The primary structure comprises 520 residues: Peptide chain release factor 3 (520 aa).

Positions 8–277 (ESRKTFAIIS…HAPMPNARQT (270 aa)) constitute a tr-type G domain. Residues 17–24 (SHPDAGKT), 85–89 (DTPGH), and 139–142 (NKLD) contribute to the GTP site.

Belongs to the TRAFAC class translation factor GTPase superfamily. Classic translation factor GTPase family. PrfC subfamily.

It is found in the cytoplasm. In terms of biological role, increases the formation of ribosomal termination complexes and stimulates activities of RF-1 and RF-2. It binds guanine nucleotides and has strong preference for UGA stop codons. It may interact directly with the ribosome. The stimulation of RF-1 and RF-2 is significantly reduced by GTP and GDP, but not by GMP. The sequence is that of Peptide chain release factor 3 from Staphylococcus epidermidis (strain ATCC 35984 / DSM 28319 / BCRC 17069 / CCUG 31568 / BM 3577 / RP62A).